The following is a 326-amino-acid chain: Vacuolar protein sorting-associated protein 26A-B (326 aa).

It belongs to the VPS26 family. Component of the heterotrimeric retromer cargo-selective complex (CSC) which is believed to associate with variable sorting nexins to form functionally distinct retromer complex variants.

Its subcellular location is the cytoplasm. The protein localises to the endosome membrane. It localises to the early endosome. Functionally, acts as a component of the retromer cargo-selective complex (CSC). The CSC is believed to be the core functional component of retromer or respective retromer complex variants acting to prevent missorting of selected transmembrane cargo proteins into the lysosomal degradation pathway. Retromer mediates retrograde transport of cargo proteins from endosomes to the trans-Golgi network (TGN). The sequence is that of Vacuolar protein sorting-associated protein 26A-B (vps26a-b) from Xenopus laevis (African clawed frog).